Reading from the N-terminus, the 221-residue chain is CASP-like protein 2U10 (221 aa).

Residues 1-22 form a disordered region; sequence MDSSSKPMNGSAGGSPVGDERK. Residues 1 to 31 are Cytoplasmic-facing; it reads MDSSSKPMNGSAGGSPVGDERKMGDHEHEFR. The chain crosses the membrane as a helical span at residues 32-52; the sequence is ISIILLRSFLLVLVIISEALM. Over 53–91 the chain is Extracellular; sequence VTDRETGSVPLPFFGLPRPVFVTKTAKYELVTGLKFYVD. The helical transmembrane segment at 92 to 112 threads the bilayer; that stretch reads ALGVVIGYTVLHLLFNIGLVA. The Cytoplasmic portion of the chain corresponds to 113–122; that stretch reads TKGTVVDCKS. A helical transmembrane segment spans residues 123-143; it reads VAWISFIADSMMGYLLLSSAA. Over 144–174 the chain is Extracellular; the sequence is VATEIGYLAEEGAPAVLWRKVCNAFGYFCTV. The chain crosses the membrane as a helical span at residues 175 to 195; that stretch reads YAISVVICFIAALVSFVVVGI. Over 196–221 the chain is Cytoplasmic; the sequence is SAYHLFRLYGIQQQAAREKEKLSAEM.

Belongs to the Casparian strip membrane proteins (CASP) family. Homodimer and heterodimers.

It localises to the cell membrane. The sequence is that of CASP-like protein 2U10 from Selaginella moellendorffii (Spikemoss).